We begin with the raw amino-acid sequence, 994 residues long: Bifunctional glutamine synthetase adenylyltransferase/adenylyl-removing enzyme (994 aa).

The segment at 1–487 (MVVTKLATQR…LHTKLFYQPL (487 aa)) is adenylyl removase. Positions 492–994 (GPTGLEIAHG…KAVVRKVFGS (503 aa)) are adenylyl transferase.

It belongs to the GlnE family. Requires Mg(2+) as cofactor.

The enzyme catalyses [glutamine synthetase]-O(4)-(5'-adenylyl)-L-tyrosine + phosphate = [glutamine synthetase]-L-tyrosine + ADP. It carries out the reaction [glutamine synthetase]-L-tyrosine + ATP = [glutamine synthetase]-O(4)-(5'-adenylyl)-L-tyrosine + diphosphate. Functionally, involved in the regulation of glutamine synthetase GlnA, a key enzyme in the process to assimilate ammonia. When cellular nitrogen levels are high, the C-terminal adenylyl transferase (AT) inactivates GlnA by covalent transfer of an adenylyl group from ATP to specific tyrosine residue of GlnA, thus reducing its activity. Conversely, when nitrogen levels are low, the N-terminal adenylyl removase (AR) activates GlnA by removing the adenylyl group by phosphorolysis, increasing its activity. The regulatory region of GlnE binds the signal transduction protein PII (GlnB) which indicates the nitrogen status of the cell. The chain is Bifunctional glutamine synthetase adenylyltransferase/adenylyl-removing enzyme from Mycobacterium tuberculosis (strain CDC 1551 / Oshkosh).